The chain runs to 639 residues: Complex I assembly factor Egm, mitochondrial (639 aa).

A mitochondrion-targeting transit peptide spans 1-26; sequence MRPNLFSGASRLLTYSRNGKLLTRGR. Residues 23–65 are disordered; sequence TRGRSTKATSSSLDSQHQDAATTEGGRAESVEESPEQQRKLPT. The span at 28 to 43 shows a compositional bias: polar residues; sequence TKATSSSLDSQHQDAA. Positions 48–65 are enriched in basic and acidic residues; sequence GRAESVEESPEQQRKLPT.

It belongs to the acyl-CoA dehydrogenase family. As to quaternary structure, associates with mitochondrial complex I assembly intermediates during its biogenesis. The cofactor is FAD.

It is found in the mitochondrion. In terms of biological role, as part of the MCIA complex, primarily participates in the assembly of the mitochondrial complex I and therefore plays a role in oxidative phosphorylation. The polypeptide is Complex I assembly factor Egm, mitochondrial (Drosophila melanogaster (Fruit fly)).